The primary structure comprises 321 residues: Transcriptional activator protein Pur-alpha (321 aa).

A disordered region spans residues methionine 1–glutamine 54. Residue alanine 2 is modified to N-acetylalanine. A compositionally biased stretch (gly residues) spans glutamate 9–glycine 51. Phosphoserine is present on serine 181. Positions leucine 294–glutamine 313 are enriched in low complexity. The tract at residues leucine 294 to aspartate 321 is disordered.

The protein belongs to the PUR DNA-binding protein family. In terms of assembly, homodimer, heterodimer with PURB and heterotrimer with PURB and YBX1/Y-box protein 1. Interacts with FMR1; this interaction occurs in association with polyribosome.

The protein localises to the nucleus. Functionally, this is a probable transcription activator that specifically binds the purine-rich single strand of the PUR element located upstream of the c-Myc gene. May play a role in the initiation of DNA replication and in recombination. This chain is Transcriptional activator protein Pur-alpha (Pura), found in Mus musculus (Mouse).